The following is a 326-amino-acid chain: Protein phosphatase 1 regulatory subunit SDS22 homolog (326 aa).

The segment at 1 to 22 is disordered; the sequence is MSNDKSAEVVVLPRENDEESKE. LRR repeat units lie at residues 35–57, 58–80, 81–102, 103–126, 128–146, 147–170, 172–190, 191–212, 213–236, 238–256, 257–280, and 281–304; these read DIDS…LTGF, PKIE…ISSL, VTLT…LESL, VNLV…KLTK, ETLY…LEAL, TQLK…HLVN, DELF…VETL, QKLS…VEQL, NNLK…PLTN, LLLD…VERL, ESLN…QLSK, and LKGL…QYRR.

The protein belongs to the SDS22 family.

It localises to the nucleus. Regulatory subunit of protein phosphatase 1. This chain is Protein phosphatase 1 regulatory subunit SDS22 homolog (sds-22), found in Caenorhabditis elegans.